The sequence spans 492 residues: Probable cytochrome P450 313a1 (492 aa).

Residue cysteine 438 coordinates heme.

Belongs to the cytochrome P450 family. Heme is required as a cofactor.

It is found in the endoplasmic reticulum membrane. The protein localises to the microsome membrane. May be involved in the metabolism of insect hormones and in the breakdown of synthetic insecticides. This chain is Probable cytochrome P450 313a1 (Cyp313a1), found in Drosophila melanogaster (Fruit fly).